We begin with the raw amino-acid sequence, 159 residues long: Ecotin (159 aa).

The first 22 residues, 1–22, serve as a signal peptide directing secretion; the sequence is MRPTPLSTILALTMAATAPAMA. Cys-68 and Cys-105 are joined by a disulfide.

The protein belongs to the protease inhibitor I11 (ecotin) family. Homodimer.

It localises to the periplasm. In terms of biological role, general inhibitor of family S1 serine proteases. The sequence is that of Ecotin from Pseudomonas putida (strain W619).